The chain runs to 235 residues: 2,3,4,5-tetrahydropyridine-2,6-dicarboxylate N-acetyltransferase (235 aa).

The protein belongs to the transferase hexapeptide repeat family. DapH subfamily.

The enzyme catalyses (S)-2,3,4,5-tetrahydrodipicolinate + acetyl-CoA + H2O = L-2-acetamido-6-oxoheptanedioate + CoA. It participates in amino-acid biosynthesis; L-lysine biosynthesis via DAP pathway; LL-2,6-diaminopimelate from (S)-tetrahydrodipicolinate (acetylase route): step 1/3. Catalyzes the transfer of an acetyl group from acetyl-CoA to tetrahydrodipicolinate. This is 2,3,4,5-tetrahydropyridine-2,6-dicarboxylate N-acetyltransferase from Exiguobacterium sp. (strain ATCC BAA-1283 / AT1b).